Consider the following 399-residue polypeptide: Acetate kinase (399 aa).

Asn-10 contacts Mg(2+). ATP is bound at residue Lys-17. Arg-91 provides a ligand contact to substrate. The active-site Proton donor/acceptor is the Asp-148. ATP contacts are provided by residues His-208–Gly-212, Asp-283–Arg-285, and Gly-331–Asn-335. Mg(2+) is bound at residue Glu-385.

This sequence belongs to the acetokinase family. As to quaternary structure, homodimer. Mg(2+) is required as a cofactor. Mn(2+) serves as cofactor.

The protein resides in the cytoplasm. It carries out the reaction acetate + ATP = acetyl phosphate + ADP. Its pathway is metabolic intermediate biosynthesis; acetyl-CoA biosynthesis; acetyl-CoA from acetate: step 1/2. Functionally, catalyzes the formation of acetyl phosphate from acetate and ATP. Can also catalyze the reverse reaction. The sequence is that of Acetate kinase from Shewanella sp. (strain MR-4).